We begin with the raw amino-acid sequence, 458 residues long: uncharacterized protein (458 aa).

2 disordered regions span residues 339–397 and 434–458; these read GTGY…ARIL and YNSE…EDDC. Composition is skewed to acidic residues over residues 344–390 and 436–458; these read SDSD…EEEP and SEDE…EDDC.

This is an uncharacterized protein from Invertebrate iridescent virus 3 (IIV-3).